Consider the following 386-residue polypeptide: Galactokinase (386 aa).

35–38 contacts substrate; that stretch reads EHTD. Position 125-131 (125-131) interacts with ATP; that stretch reads GAGLSSS. Residues serine 131 and glutamate 163 each contribute to the Mg(2+) site. The active-site Proton acceptor is the aspartate 175. A substrate-binding site is contributed by tyrosine 224.

The protein belongs to the GHMP kinase family. GalK subfamily.

The protein resides in the cytoplasm. It carries out the reaction alpha-D-galactose + ATP = alpha-D-galactose 1-phosphate + ADP + H(+). The protein operates within carbohydrate metabolism; galactose metabolism. Its function is as follows. Catalyzes the transfer of the gamma-phosphate of ATP to D-galactose to form alpha-D-galactose-1-phosphate (Gal-1-P). The polypeptide is Galactokinase (Vibrio cholerae serotype O1 (strain ATCC 39315 / El Tor Inaba N16961)).